The primary structure comprises 164 residues: UPF0561 protein C2orf68 homolog (164 aa).

Basic and acidic residues-rich tracts occupy residues 1–13 and 35–49; these read MEVI…ESVK and IARD…QAKE. Positions 1–98 are disordered; sequence MEVIRDGEGE…WNESSSGTEM (98 aa). Positions 50 to 64 are enriched in basic residues; the sequence is KQRRRHTNTPRRPRR.

It belongs to the UPF0561 family.

This chain is UPF0561 protein C2orf68 homolog, found in Danio rerio (Zebrafish).